Here is a 180-residue protein sequence, read N- to C-terminus: Large ribosomal subunit protein uL6 (180 aa).

It belongs to the universal ribosomal protein uL6 family. In terms of assembly, part of the 50S ribosomal subunit.

In terms of biological role, this protein binds to the 23S rRNA, and is important in its secondary structure. It is located near the subunit interface in the base of the L7/L12 stalk, and near the tRNA binding site of the peptidyltransferase center. In Salinispora arenicola (strain CNS-205), this protein is Large ribosomal subunit protein uL6.